Reading from the N-terminus, the 175-residue chain is FOXL2 neighbor protein (175 aa).

2 disordered regions span residues 1-39 (MTRT…PALV) and 70-100 (AQKT…GKRR).

This Homo sapiens (Human) protein is FOXL2 neighbor protein (FOXL2NB).